Reading from the N-terminus, the 497-residue chain is tRNA (adenine(58)-N(1))-methyltransferase non-catalytic subunit TRM6 (497 aa).

The interval 69–102 (TNGGSLQPKKKKEEPTSETKEAGTDNRNIIDDGK) is disordered. A compositionally biased stretch (basic and acidic residues) spans 79–102 (KKEEPTSETKEAGTDNRNIIDDGK). A substrate region spans residues 94–104 (NRNIIDDGKSQ). The residue at position 107 (threonine 107) is a Phosphothreonine. Substrate stretches follow at residues 145–154 (KYIKKKKKKY) and 175–182 (REPGKINH). Residues 276–354 (SSEPKDIASV…EKQRRQEEQK (79 aa)) are disordered. A phosphoserine mark is found at serine 298 and serine 305. Residues 311–354 (ESNHPEEQERMEIVSQDPDYKEPKESGSKKDYIQEKQRRQEEQK) show a composition bias toward basic and acidic residues. Substrate contacts are provided by arginine 349 and arginine 377. Substrate stretches follow at residues 415 to 423 (RERGGVINL) and 434 to 441 (QVLPDRSH). The disordered stretch occupies residues 468 to 497 (PSLKSSTSTLESHKTEEPAAKKRKCPESDS). Over residues 478–497 (ESHKTEEPAAKKRKCPESDS) the composition is skewed to basic and acidic residues.

Belongs to the TRM6/GCD10 family. In terms of assembly, heterotetramer; composed of two copies of TRMT6 and two copies of TRMT61A.

Its subcellular location is the nucleus. In terms of biological role, substrate-binding subunit of tRNA (adenine-N(1)-)-methyltransferase, which catalyzes the formation of N(1)-methyladenine at position 58 (m1A58) in initiator methionyl-tRNA. Together with the TRMT61A catalytic subunit, part of a mRNA N(1)-methyltransferase complex that mediates methylation of adenosine residues at the N(1) position of a small subset of mRNAs: N(1) methylation takes place in tRNA T-loop-like structures of mRNAs and is only present at low stoichiometries. This Bos taurus (Bovine) protein is tRNA (adenine(58)-N(1))-methyltransferase non-catalytic subunit TRM6 (TRMT6).